The following is a 400-amino-acid chain: Deoxyhypusine synthase-like protein (400 aa).

A disordered region spans residues 372-400; the sequence is KLGKEQMPEPQSTEPVATYPCGTPIKGRK.

This sequence belongs to the deoxyhypusine synthase family.

The protein is Deoxyhypusine synthase-like protein of Cyanothece sp. (strain PCC 7425 / ATCC 29141).